The following is a 400-amino-acid chain: Snake venom metalloproteinase H1 (400 aa).

The signal sequence occupies residues Phe1–Ser6. A propeptide spanning residues Ser7 to Thr176 is cleaved from the precursor. The 198-residue stretch at Arg180–Pro377 folds into the Peptidase M12B domain. Glu183 and Asp267 together coordinate Ca(2+). Disulfide bonds link Cys291–Cys372, Cys331–Cys356, and Cys333–Cys339. Residue His316 participates in Zn(2+) binding. Glu317 is an active-site residue. Zn(2+) is bound by residues His320 and His326. Ca(2+)-binding residues include Cys372, Asn375, Val387, Asn390, Leu392, Glu394, and Asp400. Positions Leu378–Asp400 are excised as a propeptide.

Belongs to the venom metalloproteinase (M12B) family. P-I subfamily. As to quaternary structure, monomer. Zn(2+) is required as a cofactor. In terms of tissue distribution, expressed by the venom gland.

It is found in the secreted. Its function is as follows. Snake venom metalloproteinase that impairs hemostasis in the envenomed animal. The protein is Snake venom metalloproteinase H1 of Deinagkistrodon acutus (Hundred-pace snake).